A 130-amino-acid chain; its full sequence is Small ribosomal subunit protein uS11 (130 aa).

This sequence belongs to the universal ribosomal protein uS11 family. In terms of assembly, part of the 30S ribosomal subunit. Interacts with proteins S7 and S18. Binds to IF-3.

In terms of biological role, located on the platform of the 30S subunit, it bridges several disparate RNA helices of the 16S rRNA. Forms part of the Shine-Dalgarno cleft in the 70S ribosome. This is Small ribosomal subunit protein uS11 from Dehalococcoides mccartyi (strain ATCC BAA-2266 / KCTC 15142 / 195) (Dehalococcoides ethenogenes (strain 195)).